The following is a 167-amino-acid chain: Transcription factor HES-5 (167 aa).

Residues 16–72 (KNRLRKPVVEKMRRDRINSSIEQLKLLLEQEFARHQPNSKLEKADILEMAVSYLKHS) enclose the bHLH domain. Residues 88–119 (YSEGYSWCLQEAVQFLTLHAASDTQMKLLYHF) form the Orange domain. Over residues 124–138 (APAAPAKEPPAPGAA) the composition is skewed to pro residues. Residues 124–167 (APAAPAKEPPAPGAAPQPARSSAKAAAAAVSTSRQPACGLWRPW) are disordered. Over residues 139-160 (PQPARSSAKAAAAAVSTSRQPA) the composition is skewed to low complexity. The WRPW motif signature appears at 164–167 (WRPW).

In terms of assembly, transcription repression requires formation of a complex with a corepressor protein of the Groucho/TLE family.

It is found in the nucleus. Functionally, transcriptional repressor of genes that require a bHLH protein for their transcription. Plays an important role as neurogenesis negative regulator. In Mus musculus (Mouse), this protein is Transcription factor HES-5 (Hes5).